Here is a 622-residue protein sequence, read N- to C-terminus: Cilia- and flagella-associated protein 206 (622 aa).

This sequence belongs to the CFAP206 family.

Its subcellular location is the cytoplasm. The protein resides in the cytoskeleton. The protein localises to the cilium axoneme. It localises to the cilium basal body. In terms of biological role, essential for sperm motility and is involved in the regulation of the beating frequency of motile cilia on the epithelial cells of the respiratory tract. Required for the establishment of radial spokes in sperm flagella. The protein is Cilia- and flagella-associated protein 206 of Rattus norvegicus (Rat).